The primary structure comprises 571 residues: Proline--tRNA ligase (571 aa).

It belongs to the class-II aminoacyl-tRNA synthetase family. ProS type 1 subfamily. In terms of assembly, homodimer.

The protein resides in the cytoplasm. The enzyme catalyses tRNA(Pro) + L-proline + ATP = L-prolyl-tRNA(Pro) + AMP + diphosphate. Catalyzes the attachment of proline to tRNA(Pro) in a two-step reaction: proline is first activated by ATP to form Pro-AMP and then transferred to the acceptor end of tRNA(Pro). As ProRS can inadvertently accommodate and process non-cognate amino acids such as alanine and cysteine, to avoid such errors it has two additional distinct editing activities against alanine. One activity is designated as 'pretransfer' editing and involves the tRNA(Pro)-independent hydrolysis of activated Ala-AMP. The other activity is designated 'posttransfer' editing and involves deacylation of mischarged Ala-tRNA(Pro). The misacylated Cys-tRNA(Pro) is not edited by ProRS. The chain is Proline--tRNA ligase from Shewanella putrefaciens (strain CN-32 / ATCC BAA-453).